The chain runs to 346 residues: Selenide, water dikinase (346 aa).

Residue Sec16 is part of the active site. A non-standard amino acid (selenocysteine) is located at residue Sec16. Residues Lys19 and Thr47–Asp49 each bind ATP. Asp50 contributes to the Mg(2+) binding site. ATP-binding positions include Asp67, Asp90, and Gly138–Ser140. Asp90 serves as a coordination point for Mg(2+). Asp226 is a Mg(2+) binding site.

The protein belongs to the selenophosphate synthase 1 family. Class I subfamily. In terms of assembly, homodimer. The cofactor is Mg(2+).

It carries out the reaction hydrogenselenide + ATP + H2O = selenophosphate + AMP + phosphate + 2 H(+). Its function is as follows. Synthesizes selenophosphate from selenide and ATP. The polypeptide is Selenide, water dikinase (Haemophilus ducreyi (strain 35000HP / ATCC 700724)).